Reading from the N-terminus, the 64-residue chain is Large ribosomal subunit protein bL35 (64 aa).

This sequence belongs to the bacterial ribosomal protein bL35 family.

This is Large ribosomal subunit protein bL35 from Pelodictyon phaeoclathratiforme (strain DSM 5477 / BU-1).